Reading from the N-terminus, the 207-residue chain is Outer-membrane lipoprotein carrier protein (207 aa).

A signal peptide spans 1 to 22 (MKLSEKFCVFLFFLLFTSTTHA).

Belongs to the LolA family. As to quaternary structure, monomer.

The protein resides in the periplasm. Its function is as follows. Participates in the translocation of lipoproteins from the inner membrane to the outer membrane. Only forms a complex with a lipoprotein if the residue after the N-terminal Cys is not an aspartate (The Asp acts as a targeting signal to indicate that the lipoprotein should stay in the inner membrane). This Nitrosospira multiformis (strain ATCC 25196 / NCIMB 11849 / C 71) protein is Outer-membrane lipoprotein carrier protein.